Here is a 371-residue protein sequence, read N- to C-terminus: Trans-enoyl reductase mycC (371 aa).

NADP(+) is bound at residue 51 to 54 (CDWK). 140 to 147 (CVVGTVGL) serves as a coordination point for substrate. Residues 182–185 (STAS), 205–208 (SPAN), Tyr223, and 270–271 (FE) contribute to the NADP(+) site. Residue 291-295 (GIRLL) coordinates substrate. Position 361–362 (361–362 (VS)) interacts with NADP(+).

The protein belongs to the zinc-containing alcohol dehydrogenase family. Monomer.

It carries out the reaction L-leucine + 8 malonyl-CoA + 4 S-adenosyl-L-methionine + ATP + 9 NADPH + 12 H(+) = (5S)-5-(2-methylpropyl)-3-[(2E,6R,8E,10E,12E)-6,8,10,12-tetramethyltetradeca-2,8,10,12-tetraenoyl]-2,5-dihydro-1H-pyrrol-2-one + AMP + 4 S-adenosyl-L-homocysteine + 8 CO2 + diphosphate + 9 NADP(+) + 8 CoA + 7 H2O. It functions in the pathway mycotoxin biosynthesis. Trans-enoyl reductase; part of the gene cluster that mediates the biosynthesis of myceliothermophins, mycotoxins that contain a trans-fused decalin ring system connected to a conjugated 3-pyrrolin-2-one moiety and that have potential anti-tumor properties. The polyketide synthase module (PKS) of the PKS-NRPS mycA is responsible for the synthesis of the octaketide backbone. The downstream nonribosomal peptide synthetase (NRPS) module then amidates the carboxyl end of the octaketide with a leucine. A reductase-like domain (R) at the C-terminus catalyzes the reductive release of the polyketide-amino acid intermediate. Because mycA lacks a designated enoylreductase (ER) domain, the required activity is provided the enoyl reductase mycC. Following mycA-catalyzed construction and release of aminoacyl polyketide aldehyde, Knoevenagel condensation yields the expected ketone. This C18 keto acyclic precursor is the substrate of the Diels-Alderase mycB, that catalyzes the Diels-Alder cycloaddition to produce myceliothermophin E. A yet unknown oxygenase involved in the production of myceliothermophin A, via substitution with a hydroxyl group at the C21, has still to be identified. In Thermothelomyces thermophilus (strain ATCC 42464 / BCRC 31852 / DSM 1799) (Sporotrichum thermophile), this protein is Trans-enoyl reductase mycC.